Consider the following 276-residue polypeptide: NADPH-dependent 7-cyano-7-deazaguanine reductase (276 aa).

83-85 (IES) provides a ligand contact to substrate. 85–86 (SK) lines the NADPH pocket. Cysteine 184 serves as the catalytic Thioimide intermediate. Aspartate 191 serves as the catalytic Proton donor. 223–224 (HE) lines the substrate pocket. 252–253 (RG) is an NADPH binding site.

This sequence belongs to the GTP cyclohydrolase I family. QueF type 2 subfamily. In terms of assembly, homodimer.

It is found in the cytoplasm. The catalysed reaction is 7-aminomethyl-7-carbaguanine + 2 NADP(+) = 7-cyano-7-deazaguanine + 2 NADPH + 3 H(+). It functions in the pathway tRNA modification; tRNA-queuosine biosynthesis. Functionally, catalyzes the NADPH-dependent reduction of 7-cyano-7-deazaguanine (preQ0) to 7-aminomethyl-7-deazaguanine (preQ1). In Pseudomonas entomophila (strain L48), this protein is NADPH-dependent 7-cyano-7-deazaguanine reductase.